A 669-amino-acid polypeptide reads, in one-letter code: Protein ENTREP3 (669 aa).

The next 3 helical transmembrane spans lie at 34 to 54 (LLTL…FSMV), 67 to 87 (SCPS…IVSW), and 91 to 111 (FTLV…LSMA). Residue Asn160 is glycosylated (N-linked (GlcNAc...) asparagine). A helical membrane pass occupies residues 174–194 (LFSVCGLTICAAIICTLSAIV). Ser359 and Ser390 each carry phosphoserine. 3 disordered regions span residues 387–420 (FEDS…PTAA), 445–502 (PRGG…TTSS), and 550–571 (RSAE…SGPT). The span at 399-408 (AARSYSCSAP) shows a compositional bias: low complexity. A Phosphoserine modification is found at Ser494. Ser575 bears the Phosphoserine mark. The segment at 597-624 (RRSPDPTGTGAHGYKQVRRSPWGRPGRE) is disordered.

The protein belongs to the ENTREP family. In terms of assembly, may interact with WWOX.

Its subcellular location is the membrane. The polypeptide is Protein ENTREP3 (Mus musculus (Mouse)).